The sequence spans 354 residues: Uroporphyrinogen decarboxylase (354 aa).

Substrate contacts are provided by residues 27-31 (RQAGR), Asp-77, Tyr-154, Ser-209, and His-327.

It belongs to the uroporphyrinogen decarboxylase family. Homodimer.

It is found in the cytoplasm. It carries out the reaction uroporphyrinogen III + 4 H(+) = coproporphyrinogen III + 4 CO2. It functions in the pathway porphyrin-containing compound metabolism; protoporphyrin-IX biosynthesis; coproporphyrinogen-III from 5-aminolevulinate: step 4/4. Functionally, catalyzes the decarboxylation of four acetate groups of uroporphyrinogen-III to yield coproporphyrinogen-III. This is Uroporphyrinogen decarboxylase from Pseudomonas savastanoi pv. phaseolicola (strain 1448A / Race 6) (Pseudomonas syringae pv. phaseolicola (strain 1448A / Race 6)).